Here is a 947-residue protein sequence, read N- to C-terminus: Pyruvate, phosphate dikinase 1, chloroplastic (947 aa).

A chloroplast-targeting transit peptide spans 1 to 71; it reads MPSVSRAVCV…PLRAVAAPIP (71 aa). A disordered region spans residues 39-60; the sequence is RHGKPEVAIRSGSGGSARGGHC. Phosphothreonine; by PDRP1 is present on threonine 527. Histidine 529 functions as the Tele-phosphohistidine intermediate in the catalytic mechanism. Substrate-binding residues include arginine 635, arginine 692, glutamate 821, glycine 842, threonine 843, asparagine 844, and aspartate 845. Glutamate 821 serves as a coordination point for Mg(2+). Residue aspartate 845 coordinates Mg(2+). Cysteine 907 acts as the Proton donor in catalysis.

The protein belongs to the PEP-utilizing enzyme family. Homotetramer. Mg(2+) serves as cofactor. Post-translationally, phosphorylation of Thr-527 in the dark inactivates the enzyme. Dephosphorylation upon light stimulation reactivates the enzyme. Phosphorylation increases during the first 20 days post-pollination and then remains constant through the 40-day mature seed stage. Reactivation by dephosphorylation during germination is negligible. In terms of tissue distribution, isoform 1 is only expressed in green leaves. Isoform 2 is found in roots, stems, rachis branches, leaf sheaths, green leaves and spikelets. The non-phosphorylated PPDK in mature seeds is endosperm-localized.

The protein resides in the plastid. It localises to the chloroplast. Its subcellular location is the cytoplasm. It catalyses the reaction pyruvate + phosphate + ATP = phosphoenolpyruvate + AMP + diphosphate + H(+). Its activity is regulated as follows. Activated by light-induced dephosphorylation. Inhibited by dark-induced phosphorylation. Both reactions are catalyzed by PDRP1. Functionally, formation of phosphoenolpyruvate. The cytoplasmic isoform supports the biosynthetic processes in the nascent endosperm and provides an efficient mechanism for glycolytic ATP synthesis in oxygen depleted tissues. May be involved in regulating the flux of carbon into starch and fatty acids of seeds and in the remobilization of nitrogen reserves in senescing leaves. This chain is Pyruvate, phosphate dikinase 1, chloroplastic (PPDK1), found in Oryza sativa subsp. japonica (Rice).